Consider the following 481-residue polypeptide: Dihydrolipoyl dehydrogenase (481 aa).

Residues 34 to 42 and Lys51 contribute to the FAD site; that span reads EREHMGGIC. An intrachain disulfide couples Cys42 to Cys47. Residues 195–199, Glu218, and 284–287 contribute to the NAD(+) site; these read GSGAI and AVGV. FAD-binding residues include Asp326 and Ala334. His460 (proton acceptor) is an active-site residue.

It belongs to the class-I pyridine nucleotide-disulfide oxidoreductase family. Homodimer. FAD is required as a cofactor.

It localises to the cytoplasm. The catalysed reaction is N(6)-[(R)-dihydrolipoyl]-L-lysyl-[protein] + NAD(+) = N(6)-[(R)-lipoyl]-L-lysyl-[protein] + NADH + H(+). In terms of biological role, lipoamide dehydrogenase is a component of the alpha-ketoacid dehydrogenase complexes. The chain is Dihydrolipoyl dehydrogenase (lpdA) from Rhizobium etli (strain ATCC 51251 / DSM 11541 / JCM 21823 / NBRC 15573 / CFN 42).